The primary structure comprises 207 residues: Ribosomal RNA small subunit methyltransferase G (207 aa).

S-adenosyl-L-methionine is bound by residues glycine 73, leucine 78, 124-125, and arginine 139; that span reads VE.

It belongs to the methyltransferase superfamily. RNA methyltransferase RsmG family.

The protein resides in the cytoplasm. It catalyses the reaction guanosine(527) in 16S rRNA + S-adenosyl-L-methionine = N(7)-methylguanosine(527) in 16S rRNA + S-adenosyl-L-homocysteine. Specifically methylates the N7 position of guanine in position 527 of 16S rRNA. The protein is Ribosomal RNA small subunit methyltransferase G of Cronobacter sakazakii (strain ATCC BAA-894) (Enterobacter sakazakii).